The primary structure comprises 154 residues: Prefoldin subunit alpha (154 aa).

Residues 123–154 form a disordered region; sequence EAEQLEQQAQQAQQQMMQQQMQAQQQPQDGEQ. Positions 127 to 154 are enriched in low complexity; that stretch reads LEQQAQQAQQQMMQQQMQAQQQPQDGEQ.

The protein belongs to the prefoldin alpha subunit family. Heterohexamer of two alpha and four beta subunits.

The protein resides in the cytoplasm. Its function is as follows. Molecular chaperone capable of stabilizing a range of proteins. Seems to fulfill an ATP-independent, HSP70-like function in archaeal de novo protein folding. The polypeptide is Prefoldin subunit alpha (Halobacterium salinarum (strain ATCC 29341 / DSM 671 / R1)).